An 80-amino-acid chain; its full sequence is Pigment-dispersing hormone peptides (80 aa).

A signal peptide spans 1 to 20 (MANYITIAIIVGIVCGQALS). Residues 21–58 (VEDVDRNLLELNLPYGRGLDSELQLARLMLAAPRFCHP) constitute a propeptide that is removed on maturation. Ala78 is subject to Alanine amide.

This sequence belongs to the arthropod PDH family. In terms of tissue distribution, expressed in the brain (at protein level).

It is found in the secreted. Functionally, neuropeptide PDF is the main transmitter regulating circadian locomotor rhythms. The sequence is that of Pigment-dispersing hormone peptides from Camponotus floridanus (Florida carpenter ant).